Here is a 124-residue protein sequence, read N- to C-terminus: Large ribosomal subunit protein bL12 (124 aa).

It belongs to the bacterial ribosomal protein bL12 family. As to quaternary structure, homodimer. Part of the ribosomal stalk of the 50S ribosomal subunit. Forms a multimeric L10(L12)X complex, where L10 forms an elongated spine to which 2 to 4 L12 dimers bind in a sequential fashion. Binds GTP-bound translation factors.

In terms of biological role, forms part of the ribosomal stalk which helps the ribosome interact with GTP-bound translation factors. Is thus essential for accurate translation. This is Large ribosomal subunit protein bL12 from Aromatoleum aromaticum (strain DSM 19018 / LMG 30748 / EbN1) (Azoarcus sp. (strain EbN1)).